Here is a 1693-residue protein sequence, read N- to C-terminus: MEAHQFLKAPGITTAVEQAALATANSALANAVVVRPFLSHQQIEILINLMQPRQLVFRPEVFWNQPIQRVIHNELELYCRARSGRCLEIGAHPRSINDNPNVVHRCFLRPVGRDVQRWYTAPTRGPAANCRRSALRGLPAADRTYCFDGFSGCSCPAETGIALYSLHDMSPSDVAEAMFRHGMTRLYAALHLPPEVLLPPGTYRTASYLLIHDGRRVVVTYEGDTSAGYNHDVSNLRSWIRTTKVTGDHPLVIERVRAIGCHFVLLLTAAPEPSPMPYVPYPRSTEVYVRSIFGPGGTPSLFPTSCSTKSTFHAVPAHIWDRLMLFGATLDDQAFCCSRLMTYLRGISYKVTVGTLVANEGRNASEDALTAVITAAYLTICHQRYLRTQAISKGIRRLEREHDQKFITRLYSWLFEKSGRDYIPGRQLEFYAQCRRWLSAGFHLDPRVLVFDESAPCHCRTVIRKALSKFCCFMKWLGQECTCFLQPAEGVVGDQGHDNESYEGSDVDPAESAISDISGSYVVPGTALQPLYQALDLPDEIVARACRLTATVKVSQVDGRIDCETLLGNKTFRTSFVDGAVLETNGPERHNLSFDASQSTMAAGPFSLTYAASAAGLEVRYVGAGLDHRAIFAPGVSPRSNPGEVTAFCSALYRFNREAQRHSLTGNLWFHPEGLIGLFAPFSPGHVWESAKPFCGESTLYTRTWSEVDAVSSPTRPDLGFMSEPPIPSRAATPTLAAPLPPLAPDPSPPSSAPALDEPASAATSGVPAITHQTARHRRLLFTYPDGSKVFAGSLFESTCTWLVNASNVDHCPGGGLCHAFYQRYPASFDAACFVMRDGAAAYTLTPRPIIHRVAPDYRLEHNPKRLEAAYRETCSRLGTAAYPLLGTGIYQVPIGPSFDAWERNHRPGDELYLPELAARWFEANRPTRPTLTITEDAARTANLAIELDSATDVGRACAGCRVTPGVVQYQFTAGVPGSGKSRSITRADVDVVVVPTRELRNAWRRRGFAAFTPHTAARVTDGRRVVIDEAPSLPPHLLLLHMQRAATVHLLGDPNQIPAIDFEHPGLVPAIRPDLAPTSWWHVTHRCPADVCELIRGAYPMIQTTSRVLRSLFWGEPAVGQKLVFTQAAKPANPGSVTVHDSQGATYTYTTIIATADARGLIQSSRAHAIVALTRHTEKWVIIDAPGLLREVGISDAIVNNFFLAGGEIGHQRPSVIPRGNPDANVDTLAAFPPSCQISAFHQLAEELGHRPAPVAAVLPPCPELEQGLLYLPQELTTCDSVVTFELTDIVHCRMAAPSQRKAVVSTLVGRYGRRTKLYNASHSDVRDSLARFIPAIGPVQVTTCELYELVEAMVEKGQDGSAVLELDLCNRDVSRITFFQKDCNKFTTGETIAHGKVGQGISAWSKTFCALFGPWFRAIEKAILALLPQGVFYGDAFDDTVFSAAVAAAKASMVFENDFSEFDSTQNNFSLGLECAIMEECGMPQGLIRLYHLIRSAWILQAPKESLLGFWKKHSGEPGTLLWNTVWNMAVITHCYDFRDLQVAAFKGDDSIVLCSEYRQSPGAAVLIAGCGLKLKVDFRPMRLYAGVVVAPGLGALPDVVRFAGRLTEKNWGPGPERADELRIAVSDFLRKLTNVAQMCVDVVSRVYGVSPGLVHNLIGMLQAVADGKAHFTESVKPVLDLTNSILCRVE.

Positions 56–240 (VFRPEVFWNQ…HDVSNLRSWI (185 aa)) constitute an Alphavirus-like MT domain. The methyltransferase stretch occupies residues 60-240 (EVFWNQPIQR…HDVSNLRSWI (181 aa)). The interval 241 to 439 (RTTKVTGDHP…FYAQCRRWLS (199 aa)) is Y-domain. The cysteines at positions 434 and 481 are disulfide-linked. Residues 442-509 (FHLDPRVLVF…ESYEGSDVDP (68 aa)) are putative protease. The tract at residues 510-691 (AESAISDISG…FSPGHVWESA (182 aa)) is zinc-binding. Positions 671, 673, and 686 each coordinate Zn(2+). The interval 712–778 (SSPTRPDLGF…AITHQTARHR (67 aa)) is hinge. The segment at 716–769 (RPDLGFMSEPPIPSRAATPTLAAPLPPLAPDPSPPSSAPALDEPASAATSGVPA) is disordered. Residues 739–752 (PLPPLAPDPSPPSS) are compositionally biased toward pro residues. The segment covering 753 to 763 (APALDEPASAA) has biased composition (low complexity). One can recognise a Macro domain in the interval 775–921 (ARHRRLLFTY…LYLPELAARW (147 aa)). Positions 785–942 (PDGSKVFAGS…TITEDAARTA (158 aa)) are X-domain. The (+)RNA virus helicase ATP-binding domain occupies 934 to 1082 (ITEDAARTAN…RPDLAPTSWW (149 aa)). Positions 960–1204 (GCRVTPGVVQ…ISDAIVNNFF (245 aa)) are NTPase/helicase. 975–982 (GVPGSGKS) is a binding site for ATP. The region spanning 1083–1216 (HVTHRCPADV…GGEIGHQRPS (134 aa)) is the (+)RNA virus helicase C-terminal domain. Residues 1207–1693 (GGEIGHQRPS…LTNSILCRVE (487 aa)) form an RNA-directed RNA polymerase region. One can recognise a RdRp catalytic domain in the interval 1454–1565 (SMVFENDFSE…LCSEYRQSPG (112 aa)).

The protein belongs to the hepevirus non-structural polyprotein family. The protease domain interacts with host EIF2AK4 (via C-terminus); this interaction inhibits dimerization of EIF2AK4 and prevents EIF2AK4-mediated phosphorylation of host EIF2A. Requires Mg(2+) as cofactor. In terms of processing, ORF1 polyprotein does not seem to be processed into distinct enzymatic domains by a viral protease belonging to ORF1, but could be processed by a host serine protease like thrombin.

The protein resides in the host cytoplasm. It is found in the host perinuclear region. It carries out the reaction RNA(n) + a ribonucleoside 5'-triphosphate = RNA(n+1) + diphosphate. The catalysed reaction is GTP + S-adenosyl-L-methionine = N(7)-methyl-GTP + S-adenosyl-L-homocysteine. Its activity is regulated as follows. Putative protease: Inhibited by chymostatin. Its function is as follows. Methyltransferase: Displays a capping enzyme activity. This function is necessary since all viral RNAs are synthesized in the cytoplasm, and host capping enzymes are restricted to the nucleus. The enzymatic reaction involves a covalent link between 7-methyl-GMP and the methyltransferase, whereas eukaryotic capping enzymes form a covalent complex only with GMP. Methyltransferase catalyzes transfer of a methyl group from S-adenosylmethionine to GTP and GDP to yield m(7)GTP or m(7)GDP. GDP is a better substrate than GTP. This enzyme also displays guanylyltransferase activity to form a covalent complex, methyltransferase-m(7)GMP, from which 7-methyl-GMP is transferred to the mRNA to create the cap structure. Y-domain: Indispensable for virus replication. In terms of biological role, putative protease: The putative protease domain although necessary for replication of the virus may not be a protease but rather a structural Zn(2+)-binding domain. Inhibits induction of IFN-beta by MDA5 and RIG-I pathways and down-regulates the expression of MDA5. Functionally, NTPase/helicase: Multi-functional protein that exhibits NTPase and RNA unwinding activities. Hydrolyzes all NTPs efficiently and unwinds RNA duplexes containing 5' overhangs. Possesses a sequence independent RNA-5'-triphosphatase (RTPase) activity suggestive of its role in forming viral cap structure. Also participates in viral genome replication, RNA translocation and genome packaging/unpackaging. Its function is as follows. RNA-directed RNA polymerase: Plays an essential role in the virus replication. Binds to the 3'-end of the genomic RNA to initiate viral replication. The protein is Non-structural polyprotein pORF1 of Bandicota bengalensis (lesser bandicoot rat).